The chain runs to 327 residues: DNA-directed RNA polymerase subunit alpha (327 aa).

The segment at 1 to 231 is alpha N-terminal domain (alpha-NTD); that stretch reads MIYQMQMPAK…DHIMYFANFS (231 aa). An alpha C-terminal domain (alpha-CTD) region spans residues 247–327; that stretch reads DEFESMRKLL…GMDITRYQMK (81 aa).

This sequence belongs to the RNA polymerase alpha chain family. Homodimer. The RNAP catalytic core consists of 2 alpha, 1 beta, 1 beta' and 1 omega subunit. When a sigma factor is associated with the core the holoenzyme is formed, which can initiate transcription.

The catalysed reaction is RNA(n) + a ribonucleoside 5'-triphosphate = RNA(n+1) + diphosphate. Functionally, DNA-dependent RNA polymerase catalyzes the transcription of DNA into RNA using the four ribonucleoside triphosphates as substrates. The protein is DNA-directed RNA polymerase subunit alpha of Chlorobium phaeobacteroides (strain DSM 266 / SMG 266 / 2430).